Reading from the N-terminus, the 581-residue chain is Phosphatidylinositol N-acetylglucosaminyltransferase subunit Q (581 aa).

A run of 5 helical transmembrane segments spans residues 276-298, 344-366, 381-403, 446-468, and 478-500; these read ANML…WLHS, LGRF…SPFI, LTVA…YCFY, LFIG…LYYL, and ITVQ…YSLG.

It belongs to the PIGQ family. In terms of assembly, component of the glycosylphosphatidylinositol-N-acetylglucosaminyltransferase (GPI-GnT) complex composed at least by PIGA, PIGC, PIGH, PIGP, PIGQ, PIGY and DPM2. Interacts with PIGA, PIGH and PIGC.

The protein resides in the membrane. The protein operates within glycolipid biosynthesis; glycosylphosphatidylinositol-anchor biosynthesis. Functionally, part of the glycosylphosphatidylinositol-N-acetylglucosaminyltransferase (GPI-GnT) complex that catalyzes the transfer of N-acetylglucosamine from UDP-N-acetylglucosamine to phosphatidylinositol and participates in the first step of GPI biosynthesis. This is Phosphatidylinositol N-acetylglucosaminyltransferase subunit Q from Mus musculus (Mouse).